Consider the following 901-residue polypeptide: Protein translocase subunit SecA (901 aa).

ATP contacts are provided by residues Gln-87, 105 to 109 (GEGKT), and Asp-512. Residues 859–901 (HQDDDSAAAAALAAQTGERKVGRNDPCPCGSGKKYKQCHGRLQ) form a disordered region. Zn(2+) is bound by residues Cys-885, Cys-887, Cys-896, and His-897. The span at 891-901 (KKYKQCHGRLQ) shows a compositional bias: basic residues.

The protein belongs to the SecA family. In terms of assembly, monomer and homodimer. Part of the essential Sec protein translocation apparatus which comprises SecA, SecYEG and auxiliary proteins SecDF-YajC and YidC. The cofactor is Zn(2+).

It is found in the cell inner membrane. The protein localises to the cytoplasm. It carries out the reaction ATP + H2O + cellular proteinSide 1 = ADP + phosphate + cellular proteinSide 2.. In terms of biological role, part of the Sec protein translocase complex. Interacts with the SecYEG preprotein conducting channel. Has a central role in coupling the hydrolysis of ATP to the transfer of proteins into and across the cell membrane, serving both as a receptor for the preprotein-SecB complex and as an ATP-driven molecular motor driving the stepwise translocation of polypeptide chains across the membrane. This chain is Protein translocase subunit SecA, found in Escherichia coli (strain 55989 / EAEC).